We begin with the raw amino-acid sequence, 183 residues long: MGMLDGLTNMFKMHDDDDFDDDYEDYDDDFDEDYEDDKPSARKRLFTGSSKKDSVADEEVSYTAEKPRFASKSKVVPMKTQSARGLEVVVIRPESMEDAKEITDTLLTGKAVVLNLEGIHVEIAQRIIDYSAGSTYAIRGNLQKITNYIFLVTPPNVDISGDIPEIVTGGIDLSSFNKNENRF.

The disordered stretch occupies residues 13–58; sequence MHDDDDFDDDYEDYDDDFDEDYEDDKPSARKRLFTGSSKKDSVADE. The span at 16–36 shows a compositional bias: acidic residues; that stretch reads DDDFDDDYEDYDDDFDEDYED.

This sequence belongs to the SepF family. In terms of assembly, homodimer. Interacts with FtsZ.

Its subcellular location is the cytoplasm. In terms of biological role, cell division protein that is part of the divisome complex and is recruited early to the Z-ring. Probably stimulates Z-ring formation, perhaps through the cross-linking of FtsZ protofilaments. Its function overlaps with FtsA. This is Cell division protein SepF from Lachnospira eligens (strain ATCC 27750 / DSM 3376 / VPI C15-48 / C15-B4) (Eubacterium eligens).